The primary structure comprises 254 residues: Alcohol dehydrogenase (254 aa).

An NAD(+)-binding site is contributed by 10–33 (FVAGLGGIGLDTSREIVKSGPKNL). Position 138 (Ser138) interacts with substrate. Tyr151 (proton acceptor) is an active-site residue.

It belongs to the short-chain dehydrogenases/reductases (SDR) family. Homodimer.

It carries out the reaction a primary alcohol + NAD(+) = an aldehyde + NADH + H(+). The enzyme catalyses a secondary alcohol + NAD(+) = a ketone + NADH + H(+). The sequence is that of Alcohol dehydrogenase (Adh) from Drosophila flavomontana (Fruit fly).